The chain runs to 103 residues: Iron-sulfur cluster assembly protein CyaY (103 aa).

This sequence belongs to the frataxin family.

Functionally, involved in iron-sulfur (Fe-S) cluster assembly. May act as a regulator of Fe-S biogenesis. This is Iron-sulfur cluster assembly protein CyaY from Rickettsia africae (strain ESF-5).